Consider the following 512-residue polypeptide: MKAGCSIVEKPEGGGGYQFPDWAYKTESSPGSRQIQLWHFILELLQKEEFRHVIAWQQGEYGEFVIKDPDEVARLWGRRKCKPQMNYDKLSRALRYYYNKRILHKTKGKRFTYKFNFNKLVMPNYPFINIRSSGVVPQSAPPVPTASSRFHFPPLDTHSPTNDVQPGRFSASSLTASGQESSNGTDRKTELSELEDGSAADWRRGVDPMSSRNAIGGGGIGHQKRKPDIMLPLFARPGMYPDAHSPFAVSPLPGRGGVLNVPISPALSLTPTIFSYSPSPGLSPFTSSSCFSFNPEEMKHYLHSQACSVFNYHLSPRTFPRYPGLMVPPLQCQMHPEESTQFSIKLQPPPVGRKNRERVESSEESAPVTTPTMASIPPRIKVEPASEKDPESLRQSAREKEEHTQEEGTVPSRTIEEEKGTIFARPAAPPIWPSVPISTPSEEPLEVTEDIEDRPGKEPSAPEKKEDALMPPKLRLKRRWNDDPEARELSKSGKFLWNGSGPQGLATAAADA.

Residues 35 to 116 (IQLWHFILEL…KGKRFTYKFN (82 aa)) constitute a DNA-binding region (ETS). Residues 136–222 (VPQSAPPVPT…NAIGGGGIGH (87 aa)) are disordered. Residues Ser-139, Ser-159, and Ser-315 each carry the phosphoserine modification. Residues 158–184 (HSPTNDVQPGRFSASSLTASGQESSNG) are compositionally biased toward polar residues. The disordered stretch occupies residues 336–512 (PEESTQFSIK…QGLATAAADA (177 aa)). The span at 380–406 (IKVEPASEKDPESLRQSAREKEEHTQE) shows a compositional bias: basic and acidic residues. Lys-381 participates in a covalent cross-link: Glycyl lysine isopeptide (Lys-Gly) (interchain with G-Cter in SUMO2). Residue Lys-388 is modified to N6-acetyllysine; alternate. A Glycyl lysine isopeptide (Lys-Gly) (interchain with G-Cter in SUMO2); alternate cross-link involves residue Lys-388. Acidic residues predominate over residues 443-452 (EPLEVTEDIE). Basic and acidic residues-rich tracts occupy residues 453–468 (DRPG…KEDA) and 479–491 (RWND…ELSK).

Belongs to the ETS family.

The protein resides in the nucleus. Transcriptional repressor that contribute to growth arrest during terminal macrophage differentiation by repressing target genes involved in Ras-dependent proliferation. Represses MMP1 promoter activity. In Pan paniscus (Pygmy chimpanzee), this protein is ETS translocation variant 3 (ETV3).